Consider the following 2488-residue polypeptide: Neuron navigator 2 (2488 aa).

Residues 85 to 192 (GFDTQIYTDW…LFFSLSRYKQ (108 aa)) enclose the Calponin-homology (CH) domain. Composition is skewed to low complexity over residues 194–204 (QQQPQKQHLSS), 221–247 (QAGT…PHQQ), and 255–267 (QSSA…SQSK). 2 disordered regions span residues 194–675 (QQQP…GSNT) and 706–727 (TEGN…SHFT). The span at 299-315 (GGSTTANNRRSQSFNNY) shows a compositional bias: polar residues. Over residues 356–369 (SGSSSTPTNCSTSS) the composition is skewed to low complexity. A compositionally biased stretch (polar residues) spans 384-396 (KSLSVKHSATVSM). Residues 401-410 (PPGPEAPRPT) are compositionally biased toward pro residues. A compositionally biased stretch (polar residues) spans 492–506 (RTFSRALTNKKSSLK). Residues 498–531 (LTNKKSSLKGNEKEKEKQQREKDKEKSKDLAKRA) adopt a coiled-coil conformation. The segment covering 507–547 (GNEKEKEKQQREKDKEKSKDLAKRASVTERLDLKEEPKEDP) has biased composition (basic and acidic residues). Low complexity predominate over residues 592-606 (MKSMPGKSPSAPAPS). Positions 615–626 (GKLSSGLPQQKP) are enriched in polar residues. 2 stretches are compositionally biased toward low complexity: residues 633-642 (SSSSSSLASS) and 657-675 (SSQT…GSNT). A compositionally biased stretch (polar residues) spans 706–719 (TEGNVTAESSSTGV). Residues 743–771 (EARRLRTVKNIADLRQNLEETMSSLRGTQ) adopt a coiled-coil conformation. 9 disordered regions span residues 804 to 824 (LSWR…PSMG), 939 to 1151 (LGLG…QSGS), 1177 to 1200 (KSSA…NQDD), 1213 to 1283 (YRSL…SDNE), 1295 to 1338 (PAAQ…PIAT), 1355 to 1412 (MTQQ…TNAS), 1440 to 1460 (SLSS…ASSK), 1473 to 1560 (VKTT…VTSP), and 1591 to 1629 (SLSN…SFRD). Positions 939-985 (LGLGDADSWDDSSSVSSGISDTIDNLSTDDINTSSSISSYANTPASS) are enriched in low complexity. The span at 1091 to 1102 (KTDDAKVSEKGR) shows a compositional bias: basic and acidic residues. Residues 1130-1142 (PSSSRTPTANANS) show a composition bias toward polar residues. The segment covering 1220-1245 (SKSNSRNGAGNRSSTSSIDSNISSKS) has biased composition (low complexity). Positions 1299–1309 (PVSSPAQTSLQ) are enriched in polar residues. Low complexity-rich tracts occupy residues 1363 to 1380 (SPSG…PLYS) and 1388 to 1404 (SPLA…PSNS). Polar residues predominate over residues 1440–1456 (SLSSGGVPSHNSSTGLI). A compositionally biased stretch (low complexity) spans 1477–1489 (LSESPLSSPAASP). Phosphoserine occurs at positions 1480, 1484, and 1488. Composition is skewed to basic and acidic residues over residues 1498-1510 (RKQD…DRNT) and 1526-1535 (TQEDAKEWLR). Residues 1549–1560 (SPFSSGSSVTSP) show a composition bias toward low complexity. A coiled-coil region spans residues 1686 to 1773 (EEKCQSEIRK…AAAQAAINGV (88 aa)). 2 disordered regions span residues 1790-1887 (ADLR…LRNS) and 1951-1985 (AEND…MGLS). Composition is skewed to polar residues over residues 1800 to 1820 (SDSV…SNIE), 1875 to 1887 (NGST…LRNS), and 1959 to 1985 (ESQG…MGLS). A coiled-coil region spans residues 1897–1964 (MDSEAETVMQ…RLKSESQGSG (68 aa)). Residue Ser-1977 is modified to Phosphoserine. 2157–2164 (GPSGTGKT) contributes to the ATP binding site. The disordered stretch occupies residues 2423 to 2488 (DGYSMPREGS…ILDSSLESTL (66 aa)). Over residues 2460–2473 (YSSPQSYDSDSNSN) the composition is skewed to low complexity.

The protein belongs to the Nav/unc-53 family. Highly expressed in the brain, kidney and liver. Also expressed in the thyroid, mammary gland, spinal cord, heart, placenta and lung. Abundantly expressed in colon cancers.

The protein resides in the nucleus. The catalysed reaction is ATP + H2O = ADP + phosphate + H(+). Its function is as follows. Possesses 3' to 5' helicase activity and exonuclease activity. Involved in neuronal development, specifically in the development of different sensory organs. The chain is Neuron navigator 2 (NAV2) from Homo sapiens (Human).